The sequence spans 476 residues: Protein transport protein Sec61 subunit alpha (476 aa).

At 2-33 the chain is on the cytoplasmic side; the sequence is GIKFLEVIKPFCAVLPEIQKPERKIQFREKVL. Residues 34–53 traverse the membrane as a helical segment; it reads WTAITLFIFLVCCQIPLFGI. Residues 54-76 lie on the Lumenal side of the membrane; the sequence is MSSDSADPFYWMRVILASNRGTL. Residues 77-96 traverse the membrane as a helical segment; it reads MELGISPIVTSGLIMQLLAG. The Cytoplasmic segment spans residues 97 to 117; the sequence is AKIIEVGDTPKDRALFNGAQK. A helical transmembrane segment spans residues 118–138; the sequence is LFGMIITIGQAIVYVMTGMYG. Over 139–144 the chain is Lumenal; it reads DPSEMG. A helical transmembrane segment spans residues 145-165; it reads AGICLVIIIQLFVAGLIVLLL. The Cytoplasmic segment spans residues 166–172; that stretch reads DELLQKG. Residues 173-193 traverse the membrane as a helical segment; that stretch reads YGLGSGISLFIATNICETIVW. Residues 194–240 are Lumenal-facing; it reads KAFSPTTVNTGRGTEFEGAIIALFHLLATRTDKVRALREAFYRQNLP. Residues 241-261 traverse the membrane as a helical segment; sequence NLMNLIATVFVFAVVIYFQGF. Residues 262–288 are Cytoplasmic-facing; it reads RVDLPIKSARYRGQYNTYPIKLFYTSN. The chain crosses the membrane as a helical span at residues 289-309; the sequence is IPIILQSALVSNLYVISQMLS. The Lumenal segment spans residues 310 to 354; sequence TRFSGNFLVNLLGTWSDTSTGGPARAYPVGGLCYYFSPPESFGSV. A helical transmembrane segment spans residues 355–375; that stretch reads LDDPVHASIYIVFMLGSCAFF. Residues 376-420 are Cytoplasmic-facing; that stretch reads SKTWIEVSGSSAKDVAKQLKEQQMVMRGHRETSMVHELNRYIPTA. Residues 421 to 441 traverse the membrane as a helical segment; it reads AAFGGLCIGGLSVMADFLGAI. The Lumenal portion of the chain corresponds to 442-445; sequence GSGT. Residues 446–462 traverse the membrane as a helical segment; it reads GILLAVTIIYQYFEIFV. Topologically, residues 463 to 476 are cytoplasmic; it reads KEQSEMGSMGALLF.

It belongs to the SecY/SEC61-alpha family. The SEC61 channel-forming translocon complex consists of channel-forming core components SEC61A1, SEC61B and SEC61G and different auxiliary components such as SEC62 and SEC63. The SEC61 channel associates with the multi-pass translocon (MPT) complex.

It localises to the endoplasmic reticulum membrane. Its function is as follows. Component of SEC61 channel-forming translocon complex that mediates transport of signal peptide-containing precursor polypeptides across the endoplasmic reticulum (ER). Forms a ribosome receptor and a gated pore in the ER membrane, both functions required for cotranslational translocation of nascent polypeptides. May cooperate with auxiliary protein SEC62, SEC63 and HSPA5/BiP to enable post-translational transport of small presecretory proteins. The SEC61 channel is also involved in ER membrane insertion of transmembrane proteins: it mediates membrane insertion of the first few transmembrane segments of proteins, while insertion of subsequent transmembrane regions of multi-pass membrane proteins is mediated by the multi-pass translocon (MPT) complex. The polypeptide is Protein transport protein Sec61 subunit alpha (sec61a) (Gadus ogac (Greenland cod)).